Reading from the N-terminus, the 240-residue chain is ATP-dependent Clp protease proteolytic subunit 2 (240 aa).

The active-site Nucleophile is the S132. H157 is a catalytic residue.

This sequence belongs to the peptidase S14 family. Fourteen ClpP subunits assemble into 2 heptameric rings which stack back to back to give a disk-like structure with a central cavity, resembling the structure of eukaryotic proteasomes.

It localises to the cytoplasm. The catalysed reaction is Hydrolysis of proteins to small peptides in the presence of ATP and magnesium. alpha-casein is the usual test substrate. In the absence of ATP, only oligopeptides shorter than five residues are hydrolyzed (such as succinyl-Leu-Tyr-|-NHMec, and Leu-Tyr-Leu-|-Tyr-Trp, in which cleavage of the -Tyr-|-Leu- and -Tyr-|-Trp bonds also occurs).. Functionally, cleaves peptides in various proteins in a process that requires ATP hydrolysis. Has a chymotrypsin-like activity. Plays a major role in the degradation of misfolded proteins. The polypeptide is ATP-dependent Clp protease proteolytic subunit 2 (Synechococcus elongatus (strain ATCC 33912 / PCC 7942 / FACHB-805) (Anacystis nidulans R2)).